The primary structure comprises 757 residues: MLLRLLLAWAAAGPTLGQDPWAAEPRAACGPSSCYALFPRRRTFLEAWRACRELGGDLATPRTPEEAQRVDSLVGAGPASRLLWIGLQRQARQCQLQRPLRGFTWTTGDQDTAFTNWAQPASGGPCPAQRCVALEASGEHRWLEGSCTLAVDGYLCQFGFEGACPALQDEAGQAGPAVYTTPFHLVSTEFEWLPFGSVAAVQCQAGRGASLLCVKQPEGGVGWSRAGPLCLGTGCSPDNGGCEHECVEEVDGHVSCRCTEGFRLAADGRSCEDPCAQAPCEQQCEPGGPQGYSCHCRLGFRPAEDDPHRCVDTDECQIAGVCQQMCVNYVGGFECYCSEGHELEADGISCSPAGAMGAQASQDLGDELLDDGEDEEDEDEAWKAFNGGWTEMPGILWMEPTQPPDFALAYRPSFPEDREPQIPYPEPTWPPPLSAPRVPYHSSVLSVTRPVVVSATHPTLPSAHQPPVIPATHPALSRDHQIPVIAANYPDLPSAYQPGILSVSHSAQPPAHQPPMISTKYPELFPAHQSPMFPDTRVAGTQTTTHLPGIPPNHAPLVTTLGAQLPPQAPDALVLRTQATQLPIIPTAQPSLTTTSRSPVSPAHQISVPAATQPAALPTLLPSQSPTNQTSPISPTHPHSKAPQIPREDGPSPKLALWLPSPAPTAAPTALGEAGLAEHSQRDDRWLLVALLVPTCVFLVVLLALGIVYCTRCGPHAPNKRITDCYRWVIHAGSKSPTEPMPPRGSLTGVQTCRTSV.

A signal peptide spans 1-17; the sequence is MLLRLLLAWAAAGPTLG. Residues 18–687 are Extracellular-facing; that stretch reads QDPWAAEPRA…EHSQRDDRWL (670 aa). Residues 30–156 form the C-type lectin domain; that stretch reads GPSSCYALFP…CTLAVDGYLC (127 aa). O-linked (GalNAc...) threonine glycosylation is present at T60. C131 and C147 are oxidised to a cystine. Residues 162 to 232 enclose the Sushi domain; sequence GACPALQDEA…WSRAGPLCLG (71 aa). The region spanning 312–351 is the EGF-like; calcium-binding domain; it reads DTDECQIAGVCQQMCVNYVGGFECYCSEGHELEADGISCS. 3 cysteine pairs are disulfide-bonded: C316-C326, C322-C335, and C337-C350. T401, T428, T448, T456, T459, T472, T519, T541, T543, T544, T545, T587, T593, T594, and T595 each carry an O-linked (GalNAc...) threonine glycan. O-linked (GalNAc...) serine glycosylation is found at S598 and S601. T612 and T619 each carry an O-linked (GalNAc...) threonine glycan. Over residues 618-627 the composition is skewed to low complexity; that stretch reads PTLLPSQSPT. Positions 618 to 662 are disordered; it reads PTLLPSQSPTNQTSPISPTHPHSKAPQIPREDGPSPKLALWLPSP. O-linked (GalNAc...) serine glycans are attached at residues S623 and S625. T627 and T630 each carry an O-linked (GalNAc...) threonine glycan. O-linked (GalNAc...) serine glycosylation is present at S631. The O-linked (GalNAc...) threonine glycan is linked to T636. S640 carries O-linked (GalNAc...) serine glycosylation. The chain crosses the membrane as a helical span at residues 688 to 708; it reads LVALLVPTCVFLVVLLALGIV. Over 709 to 757 the chain is Cytoplasmic; sequence YCTRCGPHAPNKRITDCYRWVIHAGSKSPTEPMPPRGSLTGVQTCRTSV. Positions 737–757 are disordered; it reads PTEPMPPRGSLTGVQTCRTSV. Phosphoserine is present on S746. Polar residues predominate over residues 748–757; it reads TGVQTCRTSV.

Interacts with PDGFRA; this interaction promotes PDGF receptor signaling pathway. Interacts with integrin beta-1/ITGB1. Interacts with insulin receptor/INSR; this interaction diminishes INSR autophosphorylation. Post-translationally, O-glycosylated with sialylated oligosaccharides. May be N-glycosylated. As to expression, expressed in tumor endothelial cells but absent or barely detectable in normal endothelial cells. Expressed in metastatic lesions of the liver and during angiogenesis of corpus luteum formation and wound healing. Expressed in vascular endothelial cells of malignant tumors but not in normal blood vessels. Expressed in stromal fibroblasts. Strongly expressed in pericytes. Expressed on stromal cells and cells with lymphoid morphology such a T-cells.

Its subcellular location is the membrane. Its function is as follows. Cell surface glycoprotein involved in various biological processes including angiogenesis, immune response modulation, and tissue remodeling and repair. Participates in pericyte proliferation through positive modulation of the PDGF receptor signaling pathway. Acts as a scaffold for factor X, triggering allosteric changes and the spatial re-alignment of factor X with the TF-factor VIIa complex, thereby enhancing coagulation activation. Modulates the insulin signaling pathway by interacting with insulin receptor/INSR and by diminishing its capacity to be autophosphorylated in response to insulin. Also regulates LPS-induced inflammatory response in macrophages by favoring the production of proinflammatory cytokines. In human, negatively regulates T-cell proliferation compared with stromal cells where it increases proliferation. This Homo sapiens (Human) protein is Endosialin (CD248).